Here is a 61-residue protein sequence, read N- to C-terminus: Probable tautomerase SAV1363 (61 aa).

P2 acts as the Proton acceptor; via imino nitrogen in catalysis.

This sequence belongs to the 4-oxalocrotonate tautomerase family.

The protein is Probable tautomerase SAV1363 of Staphylococcus aureus (strain Mu50 / ATCC 700699).